The chain runs to 488 residues: Splicing factor U2AF 65 kDa subunit (488 aa).

Composition is skewed to basic and acidic residues over residues 25–55 and 78–129; these read LESLQEDVKPDVKSDLNGNGEEKRDRDDEDR and DRRD…KYRF. The interval 25–133 is disordered; it reads LESLQEDVKP…PKKYRFWDVP (109 aa). 3 RRM domains span residues 175–257, 282–359, and 389–479; these read RRLY…RPRD, NKIF…LACA, and EILC…YYDV.

Belongs to the splicing factor SR family. In terms of assembly, forms a heterodimer with the U2AF small subunit.

It localises to the nucleus. Necessary for the splicing of pre-mRNA. Binds to the polypyrimidine tract of introns early during spliceosome assembly. The chain is Splicing factor U2AF 65 kDa subunit (uaf-1) from Caenorhabditis briggsae.